We begin with the raw amino-acid sequence, 104 residues long: V-type ATP synthase subunit F (104 aa).

It belongs to the V-ATPase F subunit family.

In terms of biological role, produces ATP from ADP in the presence of a proton gradient across the membrane. The chain is V-type ATP synthase subunit F from Thermus thermophilus (strain ATCC BAA-163 / DSM 7039 / HB27).